A 261-amino-acid chain; its full sequence is Triosephosphate isomerase (261 aa).

10–12 (NWK) is a substrate binding site. Residue His100 is the Electrophile of the active site. The active-site Proton acceptor is Glu172. Substrate is bound by residues Gly178, Ser218, and 239-240 (GG).

It belongs to the triosephosphate isomerase family. Homodimer.

It is found in the cytoplasm. It carries out the reaction D-glyceraldehyde 3-phosphate = dihydroxyacetone phosphate. Its pathway is carbohydrate biosynthesis; gluconeogenesis. The protein operates within carbohydrate degradation; glycolysis; D-glyceraldehyde 3-phosphate from glycerone phosphate: step 1/1. In terms of biological role, involved in the gluconeogenesis. Catalyzes stereospecifically the conversion of dihydroxyacetone phosphate (DHAP) to D-glyceraldehyde-3-phosphate (G3P). This Mycobacterium marinum (strain ATCC BAA-535 / M) protein is Triosephosphate isomerase.